Consider the following 623-residue polypeptide: (-)-limonene synthase TPS1, chloroplastic (623 aa).

The transit peptide at 1–60 directs the protein to the chloroplast; that stretch reads MQCIAFHQFASSSSLPIWSSIDNRFTPKTSITSISKPKPKLKSKSNLKSRSRSSTCYPIQ. The interval 29–52 is disordered; the sequence is TSITSISKPKPKLKSKSNLKSRSR. The span at 37–51 shows a compositional bias: basic residues; the sequence is PKPKLKSKSNLKSRS. (2E)-geranyl diphosphate contacts are provided by Arg-337, Asp-374, Asp-378, Arg-516, and Asp-519. Residues Asp-374 and Asp-378 each coordinate Mg(2+). Positions 374-378 match the DDXXD motif motif; sequence DDMHD. Mg(2+)-binding residues include Asp-519, Thr-523, and Glu-527.

It belongs to the terpene synthase family. Tpsb subfamily. Mg(2+) serves as cofactor. Mn(2+) is required as a cofactor. The cofactor is K(+). In terms of tissue distribution, trichome.

The protein localises to the plastid. It is found in the chloroplast. It carries out the reaction (2E)-geranyl diphosphate = (4S)-limonene + diphosphate. The catalysed reaction is (2E)-geranyl diphosphate = terpinolene + diphosphate. It catalyses the reaction (2E)-geranyl diphosphate = (1R,5R)-alpha-pinene + diphosphate. The enzyme catalyses (2E)-geranyl diphosphate = (1R,5R)-beta-pinene + diphosphate. It carries out the reaction (2E)-geranyl diphosphate = beta-myrcene + diphosphate. The catalysed reaction is (2E)-geranyl diphosphate = (4R)-limonene + diphosphate. It functions in the pathway secondary metabolite biosynthesis; terpenoid biosynthesis. Its pathway is terpene metabolism; (4S)-limonene biosynthesis; (4S)-limonene from geranyl diphosphate: step 1/1. In terms of biological role, involved in monoterpene (C10) olefins biosynthesis, constituants of cannabinoids and terpenoids-rich resins. Catalyzes mainly the conversion of (2E)-geranyl diphosphate to (-)-limonene, and also produces minor products such as (+)-limonene, (+)-alpha-pinene, terpinolene, (+)-beta-pinene and beta-myrcene. The chain is (-)-limonene synthase TPS1, chloroplastic from Cannabis sativa (Hemp).